A 361-amino-acid polypeptide reads, in one-letter code: MIVRTEDQKLVDVDDVDCSFFLVTVDLWSADGKQEMNLVLHPSSTDKYAPPNPPTKPSASTTRRRTISSSSRPPGHQASNSSTPAPPRPDEQPPSSNGSGYYPSQSQDNLTPSSPYPPHSNSEQPQTWGYPPPPPIDRAAPFPPPVLPSIQSFNRTASGDWNPSNNDDNYPIDPALRNPEGYTNNAQPDQPTYGSGTTYPPNYQTPPMPPNSGNATPQNNIPRNLATYTRTLVGPLSANACRLLDEHRKPGIFFLFQDLSVRTEGTFRLRMRLMNVGAPPAPEPGSCRVHNDISPILAQTFTEPFIVYSAKRFPGVPDTTALSIAFGNQGQKLPLRNRHGTGSKRRRRNQSGSEGESEDDS.

In terms of domain architecture, Velvet spans 1–336 (MIVRTEDQKL…GNQGQKLPLR (336 aa)). Disordered stretches follow at residues 42–222 (PSST…NNIP) and 327–361 (GNQG…EDDS). Composition is skewed to low complexity over residues 57–74 (PSAS…SRPP) and 93–107 (PPSS…SQSQ). The span at 108–127 (DNLTPSSPYPPHSNSEQPQT) shows a compositional bias: polar residues. Over residues 130-147 (YPPPPPIDRAAPFPPPVL) the composition is skewed to pro residues. Polar residues-rich tracts occupy residues 149–168 (SIQS…NNDD), 181–196 (GYTN…YGSG), and 212–222 (SGNATPQNNIP). Positions 335 to 349 (LRNRHGTGSKRRRRN) are enriched in basic residues.

It belongs to the velvet family. VelB subfamily. As to quaternary structure, component of the heterotrimeric velvet complex composed of laeA, veA and velB; VeA acting as a bridging protein between laeA and velB. Forms a heterodimeric complex with vosA; the formation of the velB-vosA complex is light-dependent.

It localises to the nucleus. Its subcellular location is the cytoplasm. Its function is as follows. Component of the velvet transcription factor complex that controls sexual/asexual developmental ratio in response to light, promoting sexual development in the darkness while stimulating asexual sporulation under illumination. The velvet complex acts as a global regulator for secondary metabolite gene expression. Component of the velB-VosA heterodimeric complex that plays a dual role in activating genes associated with spore maturation and repressing certain development-associated genes. The velB-VosA complex binds DNA through the DNA-binding domain of vosA that recognizes an 11-nucleotide consensus sequence 5'-CTGGCCGCGGC-3' consisting of two motifs in the promoters of key developmental regulatory genes. The protein is Velvet complex subunit B of Coprinopsis cinerea (strain Okayama-7 / 130 / ATCC MYA-4618 / FGSC 9003) (Inky cap fungus).